The primary structure comprises 530 residues: uncharacterized protein (530 aa).

Composition is skewed to basic and acidic residues over residues 1 to 11 and 28 to 38; these read MTALNDTERAV and PRSEETASERP. The tract at residues 1 to 38 is disordered; it reads MTALNDTERAVRNWTAGRPHRPAPMRPPRSEETASERP. Residues 1–50 lie on the Cytoplasmic side of the membrane; the sequence is MTALNDTERAVRNWTAGRPHRPAPMRPPRSEETASERPSRYYPTWLPSRS. The helical transmembrane segment at 51-71 threads the bilayer; sequence FIAAVIAIGGMQLLATMDSTV. Residues 72-91 lie on the Extracellular side of the membrane; sequence AIVALPKIQNELSLSDAGRS. Residues 92–112 form a helical membrane-spanning segment; that stretch reads WVITAYVLTFGGLMLLGGRLG. The Cytoplasmic portion of the chain corresponds to 113–119; the sequence is DTIGRKR. The helical transmembrane segment at 120–140 threads the bilayer; the sequence is TFIVGVALFTISSVLCAVAWD. At 141-150 the chain is on the extracellular side; that stretch reads EATLVIARLS. Residues 151–171 form a helical membrane-spanning segment; that stretch reads QGVGSAIASPTGLALVATTFP. Residues 172–180 lie on the Cytoplasmic side of the membrane; that stretch reads KGPARNAAT. The chain crosses the membrane as a helical span at residues 181-201; the sequence is AVFAAMTAIGSVMGLVVGGAL. The Extracellular segment spans residues 202–203; sequence TE. The chain crosses the membrane as a helical span at residues 204–224; the sequence is VSWRWAFLVNVPIGLVMIYLA. Residues 225 to 239 are Cytoplasmic-facing; that stretch reads RTALRETNKERMKLD. The helical transmembrane segment at 240–260 threads the bilayer; the sequence is ATGAILATLACTAAVFAFSIG. The Extracellular portion of the chain corresponds to 261–266; that stretch reads PEKGWM. Residues 267–287 form a helical membrane-spanning segment; it reads SGITIGSGLVALAAAVAFVIV. Topologically, residues 288 to 306 are cytoplasmic; the sequence is ERTAENPVVPFHLFRDRNR. A helical transmembrane segment spans residues 307–327; it reads LVTFSAILLAGGVMFSLTVCI. At 328–343 the chain is on the extracellular side; the sequence is GLYVQDILGYSALRAG. The chain crosses the membrane as a helical span at residues 344-364; sequence VGFIPFVIAMGIGLGVSSQLV. At 365-370 the chain is on the cytoplasmic side; it reads SRFSPR. A helical membrane pass occupies residues 371–391; the sequence is VLTIGGGYLLFGAMLYGSFFM. The Extracellular segment spans residues 392 to 400; sequence HRGVPYFPN. A helical membrane pass occupies residues 401–421; it reads LVMPIVVGGIGIGMAVVPLTL. The Cytoplasmic segment spans residues 422–437; that stretch reads SAIAGVGFDQIGPVSA. The chain crosses the membrane as a helical span at residues 438-458; that stretch reads IALMLQSLGGPLVLAVIQAVI. Residues 459–488 are Extracellular-facing; the sequence is TSRTLYLGGTTGPVKFMNDVQLAALDHAYT. The chain crosses the membrane as a helical span at residues 489 to 509; that stretch reads YGLLWVAGAAIIVGGMALFIG. The Cytoplasmic segment spans residues 510–530; the sequence is YTPQQVAHAQEVKEAIDAGEL.

The protein belongs to the major facilitator superfamily.

Its subcellular location is the cell membrane. This is an uncharacterized protein from Mycobacterium tuberculosis (strain CDC 1551 / Oshkosh).